Consider the following 624-residue polypeptide: Chaperone protein HtpG (624 aa).

Positions 1–336 are a; substrate-binding; sequence MKGQETRGFQ…SNDLPLNVSR (336 aa). Positions 337 to 552 are b; it reads EILQDSTVTR…ADEMSTQMAK (216 aa). The interval 553–624 is c; sequence LFAAAGQSVP…IRRMNQLLVS (72 aa).

This sequence belongs to the heat shock protein 90 family. As to quaternary structure, homodimer.

Its subcellular location is the cytoplasm. In terms of biological role, molecular chaperone. Has ATPase activity. The sequence is that of Chaperone protein HtpG from Salmonella choleraesuis (strain SC-B67).